The primary structure comprises 299 residues: Non-structural protein NS-S (299 aa).

Residues 66 to 69 (PNNP) are involved in inclusion bodies formation. Residues 148–220 (FEGDMVIDSC…KPLLDSLYFA (73 aa)) are interaction with host TNIP2.

Belongs to the Bandavirus NS-S protein family. Interacts with host TBK1; this interaction antagonizes TBK1 phosphorylation and inhibits TBK1-IRF3 interaction. Interacts with host STAT2; this interaction blocks the nuclear translocation and activation of host STAT2. Interacts with host TNIP2.

It localises to the host cytoplasm. Plays a role in the inhibition of host RLR-induced interferon-beta activation by inhibiting the phosphorylation of TANK-binding kinase 1/TBK1, thereby blocking IRF3 activation and preventing the establishment of an antiviral state. Also blocks IFN-triggered nuclear translocation and activation of host STAT2. This chain is Non-structural protein NS-S (NSS), found in Alces americanus (American moose).